A 210-amino-acid polypeptide reads, in one-letter code: Nucleoside triphosphate pyrophosphatase (210 aa).

Residue D79 is the Proton acceptor of the active site.

It belongs to the Maf family. It depends on a divalent metal cation as a cofactor.

The protein resides in the cytoplasm. The catalysed reaction is a ribonucleoside 5'-triphosphate + H2O = a ribonucleoside 5'-phosphate + diphosphate + H(+). It catalyses the reaction a 2'-deoxyribonucleoside 5'-triphosphate + H2O = a 2'-deoxyribonucleoside 5'-phosphate + diphosphate + H(+). Its function is as follows. Nucleoside triphosphate pyrophosphatase. May have a dual role in cell division arrest and in preventing the incorporation of modified nucleotides into cellular nucleic acids. The sequence is that of Nucleoside triphosphate pyrophosphatase from Mycolicibacterium paratuberculosis (strain ATCC BAA-968 / K-10) (Mycobacterium paratuberculosis).